Here is a 335-residue protein sequence, read N- to C-terminus: Terpene synthase 4 (335 aa).

The DDxx(x)D/E motif signature appears at 103–108; sequence DDYIFE. The NDxxSxxxD/E motif signature appears at 243 to 251; the sequence is NDLYSFNRE.

It belongs to the terpene synthase family.

The enzyme catalyses (2E,6E)-farnesyl diphosphate + H2O = (6E)-nerolidol + diphosphate. Functionally, terpene synthase that converts its substrate farnesyl diphosphate (FPP) into the sesquiterpene (E)-nerolidol. The protein is Terpene synthase 4 of Dictyostelium discoideum (Social amoeba).